The following is a 182-amino-acid chain: Putative pre-16S rRNA nuclease (182 aa).

It belongs to the YqgF nuclease family.

Its subcellular location is the cytoplasm. In terms of biological role, could be a nuclease involved in processing of the 5'-end of pre-16S rRNA. This is Putative pre-16S rRNA nuclease from Corynebacterium glutamicum (strain ATCC 13032 / DSM 20300 / JCM 1318 / BCRC 11384 / CCUG 27702 / LMG 3730 / NBRC 12168 / NCIMB 10025 / NRRL B-2784 / 534).